The primary structure comprises 157 residues: Small ribosomal subunit protein uS7 (157 aa).

It belongs to the universal ribosomal protein uS7 family. In terms of assembly, part of the 30S ribosomal subunit. Contacts proteins S9 and S11.

In terms of biological role, one of the primary rRNA binding proteins, it binds directly to 16S rRNA where it nucleates assembly of the head domain of the 30S subunit. Is located at the subunit interface close to the decoding center, probably blocks exit of the E-site tRNA. This is Small ribosomal subunit protein uS7 from Eikenella corrodens.